A 513-amino-acid chain; its full sequence is ATP synthase subunit alpha (513 aa).

Residue 169–176 coordinates ATP; sequence GDRQTGKT.

It belongs to the ATPase alpha/beta chains family. In terms of assembly, F-type ATPases have 2 components, CF(1) - the catalytic core - and CF(0) - the membrane proton channel. CF(1) has five subunits: alpha(3), beta(3), gamma(1), delta(1), epsilon(1). CF(0) has three main subunits: a(1), b(2) and c(9-12). The alpha and beta chains form an alternating ring which encloses part of the gamma chain. CF(1) is attached to CF(0) by a central stalk formed by the gamma and epsilon chains, while a peripheral stalk is formed by the delta and b chains.

The protein resides in the cell inner membrane. It carries out the reaction ATP + H2O + 4 H(+)(in) = ADP + phosphate + 5 H(+)(out). Produces ATP from ADP in the presence of a proton gradient across the membrane. The alpha chain is a regulatory subunit. This chain is ATP synthase subunit alpha, found in Bordetella pertussis (strain Tohama I / ATCC BAA-589 / NCTC 13251).